The sequence spans 291 residues: Shikimate dehydrogenase (NADP(+)) (291 aa).

Residues 26-28 (SLS) and serine 73 each bind shikimate. Catalysis depends on lysine 77, which acts as the Proton acceptor. 2 residues coordinate shikimate: asparagine 98 and aspartate 113. NADP(+) contacts are provided by residues 137 to 141 (GAGGA) and valine 238. Tyrosine 240 contributes to the shikimate binding site. Glycine 261 is an NADP(+) binding site.

The protein belongs to the shikimate dehydrogenase family. Homodimer.

The enzyme catalyses shikimate + NADP(+) = 3-dehydroshikimate + NADPH + H(+). It functions in the pathway metabolic intermediate biosynthesis; chorismate biosynthesis; chorismate from D-erythrose 4-phosphate and phosphoenolpyruvate: step 4/7. Functionally, involved in the biosynthesis of the chorismate, which leads to the biosynthesis of aromatic amino acids. Catalyzes the reversible NADPH linked reduction of 3-dehydroshikimate (DHSA) to yield shikimate (SA). The protein is Shikimate dehydrogenase (NADP(+)) of Listeria monocytogenes serotype 4b (strain F2365).